The chain runs to 362 residues: Peptide chain release factor 1 (362 aa).

Glutamine 238 bears the N5-methylglutamine mark.

It belongs to the prokaryotic/mitochondrial release factor family. Methylated by PrmC. Methylation increases the termination efficiency of RF1.

Its subcellular location is the cytoplasm. In terms of biological role, peptide chain release factor 1 directs the termination of translation in response to the peptide chain termination codons UAG and UAA. The chain is Peptide chain release factor 1 from Psychrobacter cryohalolentis (strain ATCC BAA-1226 / DSM 17306 / VKM B-2378 / K5).